The primary structure comprises 253 residues: Molybdate import ATP-binding protein MolC (253 aa).

The ABC transporter domain maps to Leu-5–Met-229. ATP is bound at residue Gly-38–Ser-45.

It belongs to the ABC transporter superfamily. In terms of assembly, the complex is composed of two ATP-binding proteins (MolC), two transmembrane proteins (MolB) and a solute-binding protein (MolA).

The protein resides in the cell inner membrane. The enzyme catalyses molybdate(out) + ATP + H2O = molybdate(in) + ADP + phosphate + H(+). With respect to regulation, the MolBCA complex shows a decrease in affinity in the presence of increasing concentrations of substrate and nucleotide. Functionally, part of the ABC transporter complex MolBCA involved in molybdate import. Responsible for energy coupling to the transport system. Functions as a low-affinity molybdate transporter. The protein is Molybdate import ATP-binding protein MolC of Haemophilus influenzae (strain ATCC 51907 / DSM 11121 / KW20 / Rd).